Consider the following 672-residue polypeptide: PHD finger protein MALE STERILITY 1 (672 aa).

Residues 614–664 (RIECECGATEEDGERMVCCDICEVWQHTRCVGVQHNEEVPRIFLCQSCDQH) form a PHD-type zinc finger.

In closed flower buds, especially in anthers.

It is found in the nucleus. In terms of biological role, transcriptional activator required for anther and post-meiotic pollen development and maturation. Seems to regulate inflorescence branching and floral development. May control tapetal development by directly regulating tapetal programmed cell death (PCD) and breakdown. Implicated in pollen cytosolic components and wall development (e.g. exine and intine formation). The protein is PHD finger protein MALE STERILITY 1 (MS1) of Arabidopsis thaliana (Mouse-ear cress).